The chain runs to 1230 residues: Ubiquitin carboxyl-terminal hydrolase 15 (1230 aa).

Residues 39–179 form the MATH domain; the sequence is EDSFTWNIPD…EGTLNITAYV (141 aa). Residues 205–536 enclose the USP domain; sequence VGFRNQGATC…SAYMLVYIRQ (332 aa). Cysteine 214 serves as the catalytic Nucleophile. Histidine 465 serves as the catalytic Proton acceptor.

It belongs to the peptidase C19 family. As to quaternary structure, interacts with PEX6; promoting association with the PEX1-PEX6 ATPase complex.

It is found in the cytoplasm. The protein localises to the cytosol. Its subcellular location is the peroxisome. The catalysed reaction is Thiol-dependent hydrolysis of ester, thioester, amide, peptide and isopeptide bonds formed by the C-terminal Gly of ubiquitin (a 76-residue protein attached to proteins as an intracellular targeting signal).. Deubiquitinase involved in peroxisome import by mediating deubiquitination of the peroxisomal import receptor PEX5. Catalyzes deubiquitination of both monoubiquitiated and polyubiquitinated forms of PEX5 following its retrotranslocation into the cytosol, resetting PEX5 for a subsequent import cycle. The chain is Ubiquitin carboxyl-terminal hydrolase 15 from Saccharomyces cerevisiae (strain ATCC 204508 / S288c) (Baker's yeast).